The sequence spans 542 residues: Tripartite motif-containing protein 26 (542 aa).

The RING-type zinc-finger motif lies at 16–57; it reads CSICLDYLRDPVTIDCGHVFCRSCTSDIRPISGNRPVCPLCK. The B box-type zinc-finger motif lies at 97–138; the sequence is QDMKLCERHQEKLHYYCEDDGKLLCVMCRESREHRPHTAVLV. Zn(2+) contacts are provided by C102, H105, C124, and H130. Residues 197–243 adopt a coiled-coil conformation; that stretch reads QFLKKREQHLLDQLATLEQLLTEGREKFKTRGVSELDRLTLVISELE. In terms of domain architecture, B30.2/SPRY spans 298-542; that stretch reads RGLRQFQGKL…WPEARLLLRP (245 aa). The tract at residues 379–440 is disordered; the sequence is REGWSEDEEE…EEEEEVQESC (62 aa). Composition is skewed to acidic residues over residues 383 to 405 and 413 to 437; these read SEDEEEGEEEEEGEEEEEDEEPG and WETDEEDESLGEEEEEEEEEEEEVQ. Positions 411–440 form a coiled coil; that stretch reads EDWETDEEDESLGEEEEEEEEEEEEVQESC.

It belongs to the TRIM/RBCC family. As to quaternary structure, interacts with TBK1; this interaction bridges together TBK1 and NEMO in order to activate TBK1. Interacts with INCA1. Autoubiquitinates upon viral infection. In turn, autoubiquitinated TRIM26 recruits NEMO and bridges TBK1-NEMO interaction.

It is found in the cytoplasm. The protein resides in the nucleus. It carries out the reaction S-ubiquitinyl-[E2 ubiquitin-conjugating enzyme]-L-cysteine + [acceptor protein]-L-lysine = [E2 ubiquitin-conjugating enzyme]-L-cysteine + N(6)-ubiquitinyl-[acceptor protein]-L-lysine.. Its function is as follows. E3 ubiquitin-protein ligase which regulates the IFN-beta production and antiviral response downstream of various DNA-encoded pattern-recognition receptors (PRRs). Also plays a central role in determining the response to different forms of oxidative stress by controlling levels of DNA glycosylases NEIL1, NEIL3 and NTH1 that are involved in repair of damaged DNA. Promotes nuclear IRF3 ubiquitination and proteasomal degradation. Bridges together TBK1 and NEMO during the innate response to viral infection leading to the activation of TBK1. Positively regulates LPS-mediated inflammatory innate immune response by catalyzing the 'Lys-11'-linked polyubiquitination of TAB1 to enhance its activation and subsequent NF-kappa-B and MAPK signaling. In a manner independent of its catalytic activity, inhibits WWP2, a SOX2-directed E3 ubiquitin ligase, and thus protects SOX2 from polyubiquitination and proteasomal degradation. Ubiquitinates the histone acetyltransferase protein complex component PHF20 and thereby triggers its degradation in the nucleus after its recruitment by the histone demethylase KDM6B, serving as a scaffold protein. Upon induction by TGF-beta, ubiquitinates the TFIID component TAF7 for proteasomal degradation. Induces ferroptosis by ubiquitinating SLC7A11, a critical protein for lipid reactive oxygen species (ROS) scavenging. In Rattus norvegicus (Rat), this protein is Tripartite motif-containing protein 26 (Trim26).